We begin with the raw amino-acid sequence, 315 residues long: 4-diphosphocytidyl-2-C-methyl-D-erythritol kinase (315 aa).

Lysine 10 is a catalytic residue. Residue 107–117 (PVAGGMAGGSA) participates in ATP binding. Aspartate 148 is a catalytic residue. Residues 292–315 (HPATSPVPGPAKNRGAHIVSIESE) are disordered.

Belongs to the GHMP kinase family. IspE subfamily.

It carries out the reaction 4-CDP-2-C-methyl-D-erythritol + ATP = 4-CDP-2-C-methyl-D-erythritol 2-phosphate + ADP + H(+). Its pathway is isoprenoid biosynthesis; isopentenyl diphosphate biosynthesis via DXP pathway; isopentenyl diphosphate from 1-deoxy-D-xylulose 5-phosphate: step 3/6. In terms of biological role, catalyzes the phosphorylation of the position 2 hydroxy group of 4-diphosphocytidyl-2C-methyl-D-erythritol. This is 4-diphosphocytidyl-2-C-methyl-D-erythritol kinase from Corynebacterium efficiens (strain DSM 44549 / YS-314 / AJ 12310 / JCM 11189 / NBRC 100395).